Consider the following 375-residue polypeptide: Negative elongation factor E (375 aa).

The stretch at 7-36 (GLSEEEEALQKKFNKLKKKKKALLALKKQS) forms a coiled coil. The segment at 30–58 (LALKKQSSSGPASQGGVKRSLSEQPVVDT) is disordered. Ser-51 carries the post-translational modification Phosphoserine. Lys-78 participates in a covalent cross-link: Glycyl lysine isopeptide (Lys-Gly) (interchain with G-Cter in SUMO1); alternate. Lys-78 participates in a covalent cross-link: Glycyl lysine isopeptide (Lys-Gly) (interchain with G-Cter in SUMO2); alternate. The interval 79–262 (AETKNSGFKR…SDSFPERRAP (184 aa)) is disordered. A Glycyl lysine isopeptide (Lys-Gly) (interchain with G-Cter in SUMO2) cross-link involves residue Lys-82. Positions 90–101 (RTLEGKLKDPEK) are enriched in basic and acidic residues. A phosphoserine mark is found at Ser-113 and Ser-115. Glu-122 is subject to PolyADP-ribosyl glutamic acid. Ser-131 and Ser-139 each carry phosphoserine. A PolyADP-ribosyl glutamic acid modification is found at Glu-151. A compositionally biased stretch (low complexity) spans 155 to 167 (APGAGDGPPRGFD). PolyADP-ribosyl glutamic acid is present on Glu-172. Residues Ser-179, Ser-181, Ser-185, and Ser-187 each carry the phosphoserine modification. A run of 4 repeats spans residues 184 to 185 (RS), 186 to 187 (RS), 188 to 189 (RD), and 190 to 191 (RS). Positions 184 to 247 (RSRSRDRSHD…RDRDRERDRE (64 aa)) are 32 X 2 AA approximate tandem repeats of R-[DSE]. Positions 186 to 260 (RSRDRSHDRS…RRSDSFPERR (75 aa)) are enriched in basic and acidic residues. Residue Ser-191 is modified to Phosphoserine. A 5; approximate repeat occupies 192–193 (HD). Repeat copies occupy residues 194 to 195 (RS), 196 to 197 (RD), 198 to 199 (RD), and 200 to 201 (RD). One copy of the 10; approximate repeat lies at 202–203 (KE). A run of 7 repeats spans residues 204-205 (RD), 206-207 (RD), 208-209 (RD), 210-211 (RD), 212-213 (RD), 214-215 (RD), and 216-217 (RD). Residues 218–219 (KD) form an 18; approximate repeat. The stretch at 220-221 (KD) is one 19; approximate repeat. 4 tandem repeats follow at residues 222 to 223 (RD), 224 to 225 (RD), 226 to 227 (RD), and 228 to 229 (RD). A 24; approximate repeat occupies 230–231 (KE). 8 repeat units span residues 232 to 233 (RD), 234 to 235 (RD), 236 to 237 (RD), 238 to 239 (RD), 240 to 241 (RD), 242 to 243 (RE), 244 to 245 (RD), and 246 to 247 (RE). Phosphoserine is present on residues Ser-253 and Ser-255. The RRM domain maps to 266–336 (NTLYVYGEDM…VQLKVNIARK (71 aa)). Phosphothreonine is present on residues Thr-276 and Thr-278. Phosphoserine occurs at positions 285 and 357.

The protein belongs to the RRM NELF-E family. In terms of assembly, the NELF complex is composed of NELFA, NELFB, NELFCD and NELFE. Interacts with NELFB. Post-translationally, phosphorylated by the P-TEFb complex at sites next to its RNA recognition motif, promoting its release from chromatin. Sumoylated. In terms of processing, poly-ADP-ribosylated by PARP1, thereby preventing RNA-binding and relieving transcription pausing.

Its subcellular location is the nucleus. It localises to the chromosome. Its function is as follows. Essential component of the NELF complex, a complex that negatively regulates the elongation of transcription by RNA polymerase II. The NELF complex, which acts via an association with the DSIF complex and causes transcriptional pausing, is counteracted by the P-TEFb kinase complex. Provides the strongest RNA binding activity of the NELF complex and may initially recruit the NELF complex to RNA. In Mus musculus (Mouse), this protein is Negative elongation factor E (Nelfe).